A 104-amino-acid chain; its full sequence is Large ribosomal subunit protein bL21 (104 aa).

This sequence belongs to the bacterial ribosomal protein bL21 family. In terms of assembly, part of the 50S ribosomal subunit. Contacts protein L20.

This protein binds to 23S rRNA in the presence of protein L20. The chain is Large ribosomal subunit protein bL21 from Nitrosococcus oceani (strain ATCC 19707 / BCRC 17464 / JCM 30415 / NCIMB 11848 / C-107).